Here is a 229-residue protein sequence, read N- to C-terminus: ADP-ribosylation factor-like protein 6-interacting protein 4 (229 aa).

Positions 1-20 (MAHVGSRKRSRSRSRSRSGR) are enriched in basic residues. The disordered stretch occupies residues 1–152 (MAHVGSRKRS…EDNDGPVLTD (152 aa)). Residues 21 to 35 (RGSEKRSKRSSKDAS) show a composition bias toward basic and acidic residues. The segment covering 66 to 87 (SRSSSTSSSSSSSSSASSSSSS) has biased composition (low complexity). Basic residues predominate over residues 90 to 117 (RKKRAKHKEKKRKKKKKKRKKKLKKRVK). Phosphoserine occurs at positions 140 and 174. Residue lysine 191 forms a Glycyl lysine isopeptide (Lys-Gly) (interchain with G-Cter in SUMO2) linkage.

The protein belongs to the ARL6IP4 family. As to quaternary structure, interacts with ZCCHC17. Interacts with SRSF2. Interacts with ARL6. In terms of tissue distribution, widely expressed. Expressed at high level in testis and thymus.

Its subcellular location is the nucleus. The protein localises to the nucleolus. It is found in the nucleus speckle. Functionally, involved in modulating alternative pre-mRNA splicing with either 5' distal site activation or preferential use of 3' proximal site. The sequence is that of ADP-ribosylation factor-like protein 6-interacting protein 4 (Arl6ip4) from Mus musculus (Mouse).